The primary structure comprises 133 residues: MSVEASILVLVGGFIGGVMRFFLSGYVGRRIGETFPWGTFVVNVSGAFVIGTAAGLGARLGAIFSTTIFHEFIMVGLLGGYTTVSSFCLQSVNLMLDGEQRQALFNIVASALLCVLAVAAGYGGIMWIMEWPG.

A run of 3 helical transmembrane segments spans residues 7-27 (ILVL…SGYV), 37-57 (WGTF…AGLG), and 60-80 (LGAI…LLGG). Na(+) is bound by residues Gly-79 and Thr-82. Residues 107–127 (IVASALLCVLAVAAGYGGIMW) traverse the membrane as a helical segment.

It belongs to the fluoride channel Fluc/FEX (TC 1.A.43) family.

It is found in the cell inner membrane. The catalysed reaction is fluoride(in) = fluoride(out). With respect to regulation, na(+) is not transported, but it plays an essential structural role and its presence is essential for fluoride channel function. Its function is as follows. Fluoride-specific ion channel. Important for reducing fluoride concentration in the cell, thus reducing its toxicity. This chain is Fluoride-specific ion channel FluC 3, found in Brucella suis biovar 1 (strain 1330).